The following is a 405-amino-acid chain: L-rhamnonate dehydratase (405 aa).

Substrate is bound by residues His33 and Arg59. The Mg(2+) site is built by Asp226, Glu252, and Glu280. The active-site Proton acceptor is the His329. Glu349 contacts substrate.

Belongs to the mandelate racemase/muconate lactonizing enzyme family. RhamD subfamily. In terms of assembly, homooctamer; tetramer of dimers. Requires Mg(2+) as cofactor.

It carries out the reaction L-rhamnonate = 2-dehydro-3-deoxy-L-rhamnonate + H2O. Its function is as follows. Catalyzes the dehydration of L-rhamnonate to 2-keto-3-deoxy-L-rhamnonate (KDR). The polypeptide is L-rhamnonate dehydratase (Escherichia coli O45:K1 (strain S88 / ExPEC)).